The following is a 299-amino-acid chain: Taste receptor type 2 member 4 (299 aa).

Topologically, residues 1–9 (MLRLFYFSA) are extracellular. A helical transmembrane segment spans residues 10-30 (VIASVILNFVGIIMNLFITVV). Residues 31-46 (NCKTWVKSHRISSSDR) are Cytoplasmic-facing. Residues 47-67 (ILFSLGITRFLMLGLFLVNTI) traverse the membrane as a helical segment. The Extracellular segment spans residues 68-81 (YFVSSNMERSVYLS). The chain crosses the membrane as a helical span at residues 82-102 (AFFVLCFMFLDSSSLWFVTLL). Over 103 to 131 (NILYCVKITNFQHSVFLLLKRSISPKIPR) the chain is Cytoplasmic. A helical membrane pass occupies residues 132–152 (LLLAFVLISAFTTCLYITLSQ). The Extracellular portion of the chain corresponds to 153 to 172 (ASPFPELVTTRNNTSFNISE). N-linked (GlcNAc...) asparagine glycans are attached at residues Asn-164, Asn-165, and Asn-169. The helical transmembrane segment at 173-193 (GILSLVVSLVLSSSLQFIINV) threads the bilayer. Over 194–230 (TSASLLIHSLRRHIQKMQKNATGFWNPQMEAHVGAMK) the chain is Cytoplasmic. Residues 231 to 251 (LMVYFLILYIPYSVATLVQYL) traverse the membrane as a helical segment. Over 252–262 (PFYAGMDMGTK) the chain is Extracellular. A helical membrane pass occupies residues 263-283 (SICLIFATLYSPGHSVLIIIT). The Cytoplasmic segment spans residues 284 to 299 (HPKLKTTAKKILCFKK).

The protein belongs to the G-protein coupled receptor T2R family.

It is found in the membrane. Its subcellular location is the cell projection. It localises to the cilium membrane. Its function is as follows. Gustducin-coupled receptor implicated in the perception of bitter compounds in the oral cavity and the gastrointestinal tract. Signals through PLCB2 and the calcium-regulated cation channel TRPM5. In airway epithelial cells, binding of denatonium increases the intracellular calcium ion concentration and stimulates ciliary beat frequency. The sequence is that of Taste receptor type 2 member 4 (TAS2R4) from Gorilla gorilla gorilla (Western lowland gorilla).